The chain runs to 286 residues: MRYIRLCIISLLATLPLAVHASPQPLEQIKQSESQLSGRVGMIEMDLASGRTLTAWRADERFPMMSTFKVVLCGAVLARVDAGDEQLERKIHYRQQDLVDYSPVSEKHLADGMTVGELCAAAITMSDNSAANLLLATVGGPAGLTAFLRQIGDNVTRLDRWETELNEALPGDARDTTTPASMAATLRKLLTSQRLSARSQRQLLQWMVDDRVAGPLIRSVLPAGWFIADKTGASERGARGIVALLGPNNKAERIVVIYLRDTPASMAERNQQIAGIGAALIEHWQR.

The signal sequence occupies residues 1–21; the sequence is MRYIRLCIISLLATLPLAVHA. The Acyl-ester intermediate role is filled by serine 66. Residues cysteine 73 and cysteine 119 are joined by a disulfide bond. Glutamate 164 (proton acceptor) is an active-site residue. 230-232 is a substrate binding site; that stretch reads KTG.

This sequence belongs to the class-A beta-lactamase family.

It carries out the reaction a beta-lactam + H2O = a substituted beta-amino acid. In terms of biological role, this enzyme hydrolyzes cefotaxime, ceftazidime and other broad spectrum cephalosporins. The protein is Beta-lactamase SHV-2 (bla) of Klebsiella pneumoniae.